The sequence spans 118 residues: DNA-directed RNA polymerase subunit omega (118 aa).

The disordered stretch occupies residues 78-104 (DEPEEDSMAMLMGGGQPDKPAEDDMSE).

This sequence belongs to the RNA polymerase subunit omega family. In terms of assembly, the RNAP catalytic core consists of 2 alpha, 1 beta, 1 beta' and 1 omega subunit. When a sigma factor is associated with the core the holoenzyme is formed, which can initiate transcription.

The enzyme catalyses RNA(n) + a ribonucleoside 5'-triphosphate = RNA(n+1) + diphosphate. Its function is as follows. Promotes RNA polymerase assembly. Latches the N- and C-terminal regions of the beta' subunit thereby facilitating its interaction with the beta and alpha subunits. The sequence is that of DNA-directed RNA polymerase subunit omega from Dinoroseobacter shibae (strain DSM 16493 / NCIMB 14021 / DFL 12).